An 884-amino-acid polypeptide reads, in one-letter code: E3 ubiquitin-protein ligase BRE1-like 1 (884 aa).

The disordered stretch occupies residues 1–37 (MGSTGEPDRKRRLSSSVAPGGGAPVSPAKRLAVAPTS). The stretch at 49 to 86 (YKNQKLSEQLEAHKFEYRALENKFAGLKEKQRTHNETL) forms a coiled coil. Residues 107–127 (KSGSPNSSPGSGHNNVQKDGT) are disordered. Low complexity predominate over residues 108–121 (SGSPNSSPGSGHNN). Coiled coils occupy residues 216–541 (LNNV…ELKL), 580–663 (SKLE…LQQI), 696–762 (RNLQ…QSLD), and 789–827 (KKRIEDDLEVMSRKASSLRAKARESAVLEKLRHEVKEYR). An RING-type zinc finger spans residues 832 to 871 (CGICHDRQKEVVITKCYHLFCNQCIQKSLGNRQRRCPSCS).

Belongs to the BRE1 family.

Its subcellular location is the nucleus. The catalysed reaction is S-ubiquitinyl-[E2 ubiquitin-conjugating enzyme]-L-cysteine + [acceptor protein]-L-lysine = [E2 ubiquitin-conjugating enzyme]-L-cysteine + N(6)-ubiquitinyl-[acceptor protein]-L-lysine.. It participates in protein modification; protein ubiquitination. Functionally, E3 ubiquitin-protein ligase that monoubiquitinates H2B to form H2BK143ub1. H2BK143ub1 gives a specific tag for epigenetic transcriptional activation and is also prerequisite for H3K4me and maybe H3K79me. It thereby plays a central role in histone code and gene regulation. Forms a ubiquitin ligase complex in cooperation with the E2 enzyme UBC2/RAD6. The polypeptide is E3 ubiquitin-protein ligase BRE1-like 1 (BRE1A) (Oryza sativa subsp. indica (Rice)).